The chain runs to 229 residues: DNA repair protein RecO (229 aa).

The protein belongs to the RecO family.

In terms of biological role, involved in DNA repair and RecF pathway recombination. The protein is DNA repair protein RecO of Legionella pneumophila (strain Lens).